The chain runs to 555 residues: Formate--tetrahydrofolate ligase (555 aa).

65-72 is a binding site for ATP; that stretch reads TPAGEGKT.

It belongs to the formate--tetrahydrofolate ligase family.

The catalysed reaction is (6S)-5,6,7,8-tetrahydrofolate + formate + ATP = (6R)-10-formyltetrahydrofolate + ADP + phosphate. It functions in the pathway one-carbon metabolism; tetrahydrofolate interconversion. This chain is Formate--tetrahydrofolate ligase, found in Thermoanaerobacter pseudethanolicus (strain ATCC 33223 / 39E) (Clostridium thermohydrosulfuricum).